The sequence spans 86 residues: Large ribosomal subunit protein bL31 (86 aa).

Residues Gly-66–Lys-86 are disordered. Positions Lys-76–Lys-86 are enriched in basic and acidic residues.

This sequence belongs to the bacterial ribosomal protein bL31 family. Type A subfamily. Part of the 50S ribosomal subunit.

Functionally, binds the 23S rRNA. This chain is Large ribosomal subunit protein bL31, found in Prochlorococcus marinus (strain MIT 9215).